The primary structure comprises 333 residues: Fructose-1,6-bisphosphatase class 1 (333 aa).

Mg(2+) is bound by residues Glu90, Asp112, Leu114, and Asp115. Substrate-binding positions include 115–118 (DGSS), Asn207, and Lys273. Glu279 contributes to the Mg(2+) binding site.

It belongs to the FBPase class 1 family. As to quaternary structure, homotetramer. The cofactor is Mg(2+).

It is found in the cytoplasm. The catalysed reaction is beta-D-fructose 1,6-bisphosphate + H2O = beta-D-fructose 6-phosphate + phosphate. The protein operates within carbohydrate biosynthesis; gluconeogenesis. This Azoarcus sp. (strain BH72) protein is Fructose-1,6-bisphosphatase class 1.